The sequence spans 396 residues: ATP synthase subunit beta, chloroplastic (396 aa).

Residue 74-81 participates in ATP binding; sequence GGAGVGKT.

Belongs to the ATPase alpha/beta chains family. F-type ATPases have 2 components, CF(1) - the catalytic core - and CF(0) - the membrane proton channel. CF(1) has five subunits: alpha(3), beta(3), gamma(1), delta(1), epsilon(1). CF(0) has four main subunits: a(1), b(1), b'(1) and c(9-12).

It localises to the plastid. Its subcellular location is the chloroplast thylakoid membrane. The enzyme catalyses ATP + H2O + 4 H(+)(in) = ADP + phosphate + 5 H(+)(out). Its function is as follows. Produces ATP from ADP in the presence of a proton gradient across the membrane. The catalytic sites are hosted primarily by the beta subunits. The protein is ATP synthase subunit beta, chloroplastic of Adiantum raddianum (Maidenhair fern).